The chain runs to 833 residues: MutS protein homolog 5 (833 aa).

Residues 1–45 (MAFRATPGRTPPGPGPRSGIPSASFPSPQPPMAGPGGIEEEDEEE) are disordered. 591 to 598 (GPNSSGKS) is a binding site for ATP.

This sequence belongs to the DNA mismatch repair MutS family. In terms of assembly, heterooligomer of MSH4 and MSH5. Interacts with HJURP. Interacts with REDIC1.

Involved in DNA mismatch repair and meiotic recombination processes. Facilitates crossovers between homologs during meiosis. The polypeptide is MutS protein homolog 5 (Msh5) (Mus musculus (Mouse)).